The primary structure comprises 671 residues: Probable potassium transport system protein Kup 2 (671 aa).

Transmembrane regions (helical) follow at residues 18–38 (GFLI…LYAM), 60–80 (VSLV…LIAL), 103–123 (WLII…ALTP), 146–166 (AVMV…RFGA), 173–193 (FGPI…INSF), 218–238 (AGFF…ALYS), 252–272 (WPFV…WLLA), 292–312 (MVIY…QALI), 343–363 (LYIP…VLYF), 373–393 (YSLA…YFLI), 402–422 (IAII…ASLV), and 424–444 (FING…VMFI).

It belongs to the HAK/KUP transporter (TC 2.A.72) family.

It is found in the cell membrane. The enzyme catalyses K(+)(in) + H(+)(in) = K(+)(out) + H(+)(out). Transport of potassium into the cell. Likely operates as a K(+):H(+) symporter. The protein is Probable potassium transport system protein Kup 2 of Lactococcus lactis subsp. lactis (strain IL1403) (Streptococcus lactis).